The sequence spans 427 residues: Trigger factor (427 aa).

Residues 163–248 (GDTVVIDFVG…IHEVKEKEVP (86 aa)) enclose the PPIase FKBP-type domain.

This sequence belongs to the FKBP-type PPIase family. Tig subfamily.

The protein localises to the cytoplasm. It catalyses the reaction [protein]-peptidylproline (omega=180) = [protein]-peptidylproline (omega=0). Involved in protein export. Acts as a chaperone by maintaining the newly synthesized protein in an open conformation. Functions as a peptidyl-prolyl cis-trans isomerase. In Streptococcus sanguinis (strain SK36), this protein is Trigger factor.